We begin with the raw amino-acid sequence, 709 residues long: Protein white (709 aa).

Residues 1–35 are disordered; it reads MTINTDDQYADGESKTTISSNRRYSTSSFQDQSME. The span at 15–32 shows a compositional bias: polar residues; the sequence is KTTISSNRRYSTSSFQDQ. The ABC transporter domain occupies 103 to 348; that stretch reads FTRQRLVKDF…SQLGIPCPPN (246 aa). ATP contacts are provided by residues 136–143 and 292–299; these read GSSGAGKT and GMAMKGKT. A helical transmembrane segment spans residues 457–475; that stretch reads LLQTAMVASLIGSIYFGQV. N-linked (GlcNAc...) asparagine glycosylation occurs at Asn485. 4 consecutive transmembrane segments (helical) span residues 487-507, 537-555, 564-585, and 598-616; these read SLFLFLTNMTFQNVFAVINVF, LPLFIAVPFVFTSITYPMI, YLTTLFIVTLVANVSTSFGYLI, and VGPPVVIPFLIFGGFFLNS. The N-linked (GlcNAc...) asparagine glycan is linked to Asn658. The chain crosses the membrane as a helical span at residues 681 to 700; that stretch reads LDIGCLFALIVLFRLGALFC.

It belongs to the ABC transporter superfamily. ABCG family. Eye pigment precursor importer (TC 3.A.1.204) subfamily.

It is found in the membrane. In terms of biological role, may be part of a membrane-spanning permease system necessary for the transport of pigment precursors into pigment cells responsible for eye color. This is Protein white (W) from Anopheles albimanus (New world malaria mosquito).